The primary structure comprises 387 residues: 3-ketoacyl-CoA thiolase (387 aa).

The Acyl-thioester intermediate role is filled by Cys-91. Residues His-343 and Cys-373 each act as proton acceptor in the active site.

Belongs to the thiolase-like superfamily. Thiolase family. As to quaternary structure, heterotetramer of two alpha chains (FadB) and two beta chains (FadA).

The protein localises to the cytoplasm. It catalyses the reaction an acyl-CoA + acetyl-CoA = a 3-oxoacyl-CoA + CoA. It participates in lipid metabolism; fatty acid beta-oxidation. Catalyzes the final step of fatty acid oxidation in which acetyl-CoA is released and the CoA ester of a fatty acid two carbons shorter is formed. This Escherichia fergusonii (strain ATCC 35469 / DSM 13698 / CCUG 18766 / IAM 14443 / JCM 21226 / LMG 7866 / NBRC 102419 / NCTC 12128 / CDC 0568-73) protein is 3-ketoacyl-CoA thiolase.